Consider the following 874-residue polypeptide: Alanine--tRNA ligase (874 aa).

Residues histidine 562, histidine 566, cysteine 665, and histidine 669 each coordinate Zn(2+).

Belongs to the class-II aminoacyl-tRNA synthetase family. The cofactor is Zn(2+).

Its subcellular location is the cytoplasm. It carries out the reaction tRNA(Ala) + L-alanine + ATP = L-alanyl-tRNA(Ala) + AMP + diphosphate. Its function is as follows. Catalyzes the attachment of alanine to tRNA(Ala) in a two-step reaction: alanine is first activated by ATP to form Ala-AMP and then transferred to the acceptor end of tRNA(Ala). Also edits incorrectly charged Ser-tRNA(Ala) and Gly-tRNA(Ala) via its editing domain. The sequence is that of Alanine--tRNA ligase from Pseudomonas putida (strain ATCC 47054 / DSM 6125 / CFBP 8728 / NCIMB 11950 / KT2440).